The primary structure comprises 359 residues: 3-dehydroquinate synthase (359 aa).

Residues E72–K77, G106–D110, T130–T131, K143, K152, and T170–T173 each bind NAD(+). Zn(2+) contacts are provided by E185, H248, and H265.

This sequence belongs to the sugar phosphate cyclases superfamily. Dehydroquinate synthase family. Co(2+) is required as a cofactor. The cofactor is Zn(2+). Requires NAD(+) as cofactor.

Its subcellular location is the cytoplasm. The catalysed reaction is 7-phospho-2-dehydro-3-deoxy-D-arabino-heptonate = 3-dehydroquinate + phosphate. It functions in the pathway metabolic intermediate biosynthesis; chorismate biosynthesis; chorismate from D-erythrose 4-phosphate and phosphoenolpyruvate: step 2/7. Functionally, catalyzes the conversion of 3-deoxy-D-arabino-heptulosonate 7-phosphate (DAHP) to dehydroquinate (DHQ). The chain is 3-dehydroquinate synthase from Pelobacter propionicus (strain DSM 2379 / NBRC 103807 / OttBd1).